We begin with the raw amino-acid sequence, 218 residues long: Large ribosomal subunit protein uL3 (218 aa).

This sequence belongs to the universal ribosomal protein uL3 family. In terms of assembly, part of the 50S ribosomal subunit. Forms a cluster with proteins L14 and L19.

Functionally, one of the primary rRNA binding proteins, it binds directly near the 3'-end of the 23S rRNA, where it nucleates assembly of the 50S subunit. The polypeptide is Large ribosomal subunit protein uL3 (Corynebacterium urealyticum (strain ATCC 43042 / DSM 7109)).